The primary structure comprises 509 residues: Maturase K (509 aa).

Belongs to the intron maturase 2 family. MatK subfamily.

It localises to the plastid. The protein localises to the chloroplast. In terms of biological role, usually encoded in the trnK tRNA gene intron. Probably assists in splicing its own and other chloroplast group II introns. The chain is Maturase K from Hottonia palustris (Water-violet).